Here is a 437-residue protein sequence, read N- to C-terminus: Aromatic peroxidase fscJ (437 aa).

An N-terminal signal peptide occupies residues 1 to 19 (MKWLHLLSVVACVADEVYA). Cysteine 83 is a heme binding site.

Belongs to the chloroperoxidase family. The cofactor is heme b.

Its pathway is secondary metabolite biosynthesis. In terms of biological role, aromatic peroxidase; part of the fragmented gene cluster that mediates the biosynthesis of fusarochromene, a tryptophan-derived metabolite closely related to a group of mycotoxins including fusarochromanone. The role of fscJ within the pathway has not been identified yet. The first step of the pathway is the epimerization of L-tryptophan to D-tryptophan in the presence of the NRPS-like tryptophan epimerase fscC. D-tryptophan is subsequently hydroxylated by the tryptophan 6-hydroxylase fscE to yield 6-hydroxytryptophan. The pyrrole ring undergoes cleavaged by the tryptophan 2,3-dioxygenase fscD and is finally converted to 4-hydroxykyrunenine by the hydrolase fscH. The NRPS-like oxidoreductase fscA reduces the carboxyl group to primary alcohol and the DMATS-type prenyltransferase fscG performs prenylation, followed by the formation of a chromene ring catalyzed by the oxidoreductase fscI, which leads to desacetylfusarochromene. Epoxidation by fscF and rearrangement reactions of chromene double bonds convert compound desacetylfusarochromene to fusarochromanones. Although specific acetyltransferases were not found near the fsc gene cluster, several predicted enzymes containing the N-acetyltransferase superfamily domain are present in the genome of F.equiseti. These predicted enzymes may have the potential to convert desacetylfusarochromene to fusarochromene. The chain is Aromatic peroxidase fscJ from Fusarium equiseti (Fusarium scirpi).